A 162-amino-acid polypeptide reads, in one-letter code: Cyclic pyranopterin monophosphate synthase (162 aa).

Substrate is bound by residues 79 to 81 (LCH) and 117 to 118 (ME). The active site involves Asp132.

The protein belongs to the MoaC family. As to quaternary structure, homohexamer; trimer of dimers.

It carries out the reaction (8S)-3',8-cyclo-7,8-dihydroguanosine 5'-triphosphate = cyclic pyranopterin phosphate + diphosphate. Its pathway is cofactor biosynthesis; molybdopterin biosynthesis. Its function is as follows. Catalyzes the conversion of (8S)-3',8-cyclo-7,8-dihydroguanosine 5'-triphosphate to cyclic pyranopterin monophosphate (cPMP). This is Cyclic pyranopterin monophosphate synthase from Bordetella avium (strain 197N).